The primary structure comprises 290 residues: Light-independent protochlorophyllide reductase iron-sulfur ATP-binding protein (290 aa).

ATP-binding positions include 10–15 (GIGKST) and K39. S14 serves as a coordination point for Mg(2+). 2 residues coordinate [4Fe-4S] cluster: C95 and C129. 180-181 (NR) lines the ATP pocket.

Belongs to the NifH/BchL/ChlL family. In terms of assembly, homodimer. Protochlorophyllide reductase is composed of three subunits; ChlL, ChlN and ChlB. The cofactor is [4Fe-4S] cluster.

The protein localises to the plastid. The protein resides in the chloroplast. It carries out the reaction chlorophyllide a + oxidized 2[4Fe-4S]-[ferredoxin] + 2 ADP + 2 phosphate = protochlorophyllide a + reduced 2[4Fe-4S]-[ferredoxin] + 2 ATP + 2 H2O. Its pathway is porphyrin-containing compound metabolism; chlorophyll biosynthesis (light-independent). In terms of biological role, component of the dark-operative protochlorophyllide reductase (DPOR) that uses Mg-ATP and reduced ferredoxin to reduce ring D of protochlorophyllide (Pchlide) to form chlorophyllide a (Chlide). This reaction is light-independent. The L component serves as a unique electron donor to the NB-component of the complex, and binds Mg-ATP. The polypeptide is Light-independent protochlorophyllide reductase iron-sulfur ATP-binding protein (Porphyra purpurea (Red seaweed)).